The sequence spans 303 residues: UDP-3-O-acyl-N-acetylglucosamine deacetylase (303 aa).

Zn(2+) contacts are provided by His-78, His-237, and Asp-241. Residue His-264 is the Proton donor of the active site.

It belongs to the LpxC family. The cofactor is Zn(2+).

The enzyme catalyses a UDP-3-O-[(3R)-3-hydroxyacyl]-N-acetyl-alpha-D-glucosamine + H2O = a UDP-3-O-[(3R)-3-hydroxyacyl]-alpha-D-glucosamine + acetate. It functions in the pathway glycolipid biosynthesis; lipid IV(A) biosynthesis; lipid IV(A) from (3R)-3-hydroxytetradecanoyl-[acyl-carrier-protein] and UDP-N-acetyl-alpha-D-glucosamine: step 2/6. Its function is as follows. Catalyzes the hydrolysis of UDP-3-O-myristoyl-N-acetylglucosamine to form UDP-3-O-myristoylglucosamine and acetate, the committed step in lipid A biosynthesis. The sequence is that of UDP-3-O-acyl-N-acetylglucosamine deacetylase from Cellvibrio japonicus (strain Ueda107) (Pseudomonas fluorescens subsp. cellulosa).